We begin with the raw amino-acid sequence, 792 residues long: MYRVLRLLPLPLSVAISLSALADEKPPNWGLCPATLPLQGFEQAPGMDKHVVQSRPQLPTNIEGDTLTGTARTPLYQGNVLMARGDQFLGADSVRMDTETDSYVAEGHVRYQDSSILVVADRAEGNQDTDVHKISNIQYQLIGRRGNGVAKSVDIHGQVGQTHEATYTTCDPSQAIWRLRAPEIDVDNVEGFGVARHAVFEVGQWPVLYLPWFKFPIDSRRQTGLLYPQLGYSGRNGFDYAQPIYLNLAPNYDATLYPRYMQKRGFMIDTEFRYLYDDGKWQTRAAFIPNDQLRDKDRGRFSFNGYHNIDNHWQARASLAWVSDTRYMEDFSSRLVGMSSLSSLQSTVGVYGTGETWTAGLMADRWQLTDYSLDESALAYNRQPRLFFNWDKPVFDFLEFGLYSEVVRFKHDDAYLVALQNDGNYLRTGEVIRYYGGTRLDVKPYLLLPFTGASWYVTPTFGWRYSSYYLDSGIAEQLNGNRTPVRSLPIISLDSGVYLDRDTSVFGRNYLNTLEPRFYYLYVPYRNQSDLPLFDTRAFTFSWGQLFRDSRYTGPDRQNDANQLTLAVTSRWLDQNTGKEDLALSVGQILYFKDSLVTLNDSEERIQQGKSVWVSDVAYNVNDRWTLNATYQWNPNFRRDDLASIRARYLIGSDGIINLAYRYRRNTLDGTTQLKQTDFSFLYPINPRWSAIGRYYYSLLDKKPLEIISGLQWDSCCLAVRTVLRRYMRDRTGNMDNSIQLEFVFKGLSSVGQDTDRVLRRAILGYYRDDLYLVPPSNTTTDPDAYDPNKIP.

Positions 1 to 22 (MYRVLRLLPLPLSVAISLSALA) are cleaved as a signal peptide.

Belongs to the LptD family. As to quaternary structure, component of the lipopolysaccharide transport and assembly complex. Interacts with LptE and LptA.

Its subcellular location is the cell outer membrane. Its function is as follows. Together with LptE, is involved in the assembly of lipopolysaccharide (LPS) at the surface of the outer membrane. This Xylella fastidiosa (strain 9a5c) protein is LPS-assembly protein LptD.